A 264-amino-acid chain; its full sequence is Polyneuridine aldehyde esterase (264 aa).

The propeptide occupies 1 to 6 (MHSAAN). The 111-residue stretch at 12–122 (HFVLVHGGCL…MMPDPNHSLT (111 aa)) folds into the AB hydrolase-1 domain. Active-site residues include Ser87, Asp216, and His244. Position 87 (Ser87) interacts with 16-epivellosimine.

It belongs to the AB hydrolase superfamily. In terms of assembly, homodimer; homodimerizes in aqueous solutions at pH 7.0. Mainly expressed in roots and, to a lower level, in leaves.

The catalysed reaction is polyneuridine aldehyde + H2O = 16-epivellosimine + methanol + CO2. It participates in alkaloid biosynthesis; ajmaline biosynthesis. Inhibited by DEPC and HgCl(2). Functionally, hydrolase involved in the biosynthesis of ajmaline-type monoterpenoid indole alkaloids (MIAs) natural products, important plant-derived pharmaceuticals used in the therapy of heart disorders. Catalyzes the hydrolysis of polyneuridine aldehyde into epi-vellosimine, precursor of vomilenine, an intermediate chemical in the biosynthesis of ajmaline. The polypeptide is Polyneuridine aldehyde esterase (Rauvolfia serpentina (Serpentine wood)).